The following is a 160-amino-acid chain: Cyclic pyranopterin monophosphate synthase (160 aa).

Substrate contacts are provided by residues 77-79 (MCH) and 114-115 (ME). The active site involves Asp129.

This sequence belongs to the MoaC family. In terms of assembly, homohexamer; trimer of dimers.

It carries out the reaction (8S)-3',8-cyclo-7,8-dihydroguanosine 5'-triphosphate = cyclic pyranopterin phosphate + diphosphate. The protein operates within cofactor biosynthesis; molybdopterin biosynthesis. Functionally, catalyzes the conversion of (8S)-3',8-cyclo-7,8-dihydroguanosine 5'-triphosphate to cyclic pyranopterin monophosphate (cPMP). This is Cyclic pyranopterin monophosphate synthase from Listeria monocytogenes serotype 4b (strain F2365).